Reading from the N-terminus, the 434-residue chain is 3-phosphoshikimate 1-carboxyvinyltransferase (434 aa).

Residues Lys-22, Ser-23, and Arg-27 each contribute to the 3-phosphoshikimate site. Residue Lys-22 coordinates phosphoenolpyruvate. Phosphoenolpyruvate contacts are provided by Gly-93 and Arg-121. 6 residues coordinate 3-phosphoshikimate: Ser-168, Ser-169, Gln-170, Ser-199, Asp-320, and Lys-347. Gln-170 contributes to the phosphoenolpyruvate binding site. Asp-320 serves as the catalytic Proton acceptor. 3 residues coordinate phosphoenolpyruvate: Arg-351, Arg-394, and Lys-419.

Belongs to the EPSP synthase family. As to quaternary structure, monomer.

Its subcellular location is the cytoplasm. The catalysed reaction is 3-phosphoshikimate + phosphoenolpyruvate = 5-O-(1-carboxyvinyl)-3-phosphoshikimate + phosphate. It functions in the pathway metabolic intermediate biosynthesis; chorismate biosynthesis; chorismate from D-erythrose 4-phosphate and phosphoenolpyruvate: step 6/7. In terms of biological role, catalyzes the transfer of the enolpyruvyl moiety of phosphoenolpyruvate (PEP) to the 5-hydroxyl of shikimate-3-phosphate (S3P) to produce enolpyruvyl shikimate-3-phosphate and inorganic phosphate. This chain is 3-phosphoshikimate 1-carboxyvinyltransferase, found in Paraburkholderia phytofirmans (strain DSM 17436 / LMG 22146 / PsJN) (Burkholderia phytofirmans).